A 113-amino-acid polypeptide reads, in one-letter code: Urease subunit beta (113 aa).

This sequence belongs to the urease beta subunit family. Heterotrimer of UreA (gamma), UreB (beta) and UreC (alpha) subunits. Three heterotrimers associate to form the active enzyme.

It localises to the cytoplasm. It carries out the reaction urea + 2 H2O + H(+) = hydrogencarbonate + 2 NH4(+). The protein operates within nitrogen metabolism; urea degradation; CO(2) and NH(3) from urea (urease route): step 1/1. This is Urease subunit beta from Cyanothece sp. (strain PCC 7425 / ATCC 29141).